Here is a 221-residue protein sequence, read N- to C-terminus: Adenylate kinase (221 aa).

10–15 (GAGKGT) is a binding site for ATP. The NMP stretch occupies residues 30-59 (STGDMLRAAVKAGTEFGVAAKKIMDAGGLV). Residues T31, R36, 57-59 (GLV), 85-88 (GFPR), and Q92 each bind AMP. The interval 122 to 159 (GRRVHPASGRTYHIKYNPPKVEGKDDVTGDALIQRDDD) is LID. ATP contacts are provided by residues R123 and 132 to 133 (TY). Positions 156 and 167 each coordinate AMP. G207 lines the ATP pocket.

Belongs to the adenylate kinase family. As to quaternary structure, monomer.

The protein resides in the cytoplasm. The enzyme catalyses AMP + ATP = 2 ADP. The protein operates within purine metabolism; AMP biosynthesis via salvage pathway; AMP from ADP: step 1/1. Catalyzes the reversible transfer of the terminal phosphate group between ATP and AMP. Plays an important role in cellular energy homeostasis and in adenine nucleotide metabolism. This chain is Adenylate kinase, found in Polynucleobacter asymbioticus (strain DSM 18221 / CIP 109841 / QLW-P1DMWA-1) (Polynucleobacter necessarius subsp. asymbioticus).